We begin with the raw amino-acid sequence, 392 residues long: Leucine-rich repeat-containing protein 74B (392 aa).

Residues 24–46 (RLSGVPEAEQGPEANWDSDLETE) are disordered. LRR repeat units lie at residues 106–129 (NPYV…ALAG), 134–157 (SSSI…ALCA), 162–185 (NQAM…HLAE), 192–213 (DLKS…TLGP), 220–241 (GLTE…AFAR), 248–269 (FLKV…AVGE), 276–297 (VLEE…SLGL), 304–325 (TLRI…GLLK), and 334–356 (ALEL…ASSV).

The polypeptide is Leucine-rich repeat-containing protein 74B (Homo sapiens (Human)).